The primary structure comprises 157 residues: Vitamin K-dependent protein C (157 aa).

Residues 1–157 (EKWELDLDIK…GCGRLHNYGV (157 aa)) form the Peptidase S1 domain. Residue Asn-17 is glycosylated (N-linked (GlcNAc...) asparagine). Catalysis depends on Asp-26, which acts as the Charge relay system. N-linked (GlcNAc...) asparagine glycosylation is present at Asn-78. 2 cysteine pairs are disulfide-bonded: Cys-96-Cys-110 and Cys-121-Cys-149. Residue Ser-125 is the Charge relay system of the active site.

The protein belongs to the peptidase S1 family. As to expression, plasma; synthesized in the liver.

It localises to the secreted. It is found in the golgi apparatus. Its subcellular location is the endoplasmic reticulum. It carries out the reaction Degradation of blood coagulation factors Va and VIIIa.. In terms of biological role, protein C is a vitamin K-dependent serine protease that regulates blood coagulation by inactivating factors Va and VIIIa in the presence of calcium ions and phospholipids. Exerts a protective effect on the endothelial cell barrier function. The sequence is that of Vitamin K-dependent protein C (PROC) from Felis catus (Cat).